A 508-amino-acid polypeptide reads, in one-letter code: NAD(P)H-quinone oxidoreductase subunit 2 B, chloroplastic (508 aa).

A run of 13 helical transmembrane segments spans residues 24-44 (LLLFDGSLIFPECILIFGLIL), 59-79 (WLYFISSTSLVMSITALLFRW), 99-119 (IFQFLILLCSTLCIPLSVEYI), 124-144 (MAITEFLLFVLTATLGGMFLC), 149-169 (FITIFVAPECFSLCSYLLSGY), 184-204 (LLMGGASSSILVHGFSWLYGL), 227-247 (PGISIALIFITVGIGFKLSPA), 295-315 (WHLLLEILAILSMILGNLIAI), 323-343 (MLAYSSIGQIGYVIIGIIVGD), 354-374 (YMLFYISMNLGAFACIVLFGL), 395-415 (ALSLALCLLSLGGLPPLAGFF), 418-438 (LYLFWCGWQAGLYFLVFIGLL), and 482-502 (MIVCVIASTIPGISMNPIIAI).

It belongs to the complex I subunit 2 family. NDH is composed of at least 16 different subunits, 5 of which are encoded in the nucleus.

The protein resides in the plastid. The protein localises to the chloroplast thylakoid membrane. The catalysed reaction is a plastoquinone + NADH + (n+1) H(+)(in) = a plastoquinol + NAD(+) + n H(+)(out). It catalyses the reaction a plastoquinone + NADPH + (n+1) H(+)(in) = a plastoquinol + NADP(+) + n H(+)(out). In terms of biological role, NDH shuttles electrons from NAD(P)H:plastoquinone, via FMN and iron-sulfur (Fe-S) centers, to quinones in the photosynthetic chain and possibly in a chloroplast respiratory chain. The immediate electron acceptor for the enzyme in this species is believed to be plastoquinone. Couples the redox reaction to proton translocation, and thus conserves the redox energy in a proton gradient. The protein is NAD(P)H-quinone oxidoreductase subunit 2 B, chloroplastic of Ipomoea purpurea (Common morning glory).